The primary structure comprises 209 residues: Glutathione S-transferase (209 aa).

The region spanning 7–91 is the GST N-terminal domain; it reads FFFFFFFFFS…YLSKKYNISG (85 aa). Residues 62 to 63, 75 to 76, Asp-109, Lys-121, and Thr-125 each bind glutathione; these read QV and QS. The 117-residue stretch at 93-209 folds into the GST C-terminal domain; the sequence is GELNEFYADM…YIANRKESVY (117 aa).

Belongs to the GST superfamily. In terms of assembly, homodimer. In the absence of ligands two homodimers may interact to form a tetramer.

The catalysed reaction is RX + glutathione = an S-substituted glutathione + a halide anion + H(+). Its function is as follows. Conjugation of reduced glutathione to a wide number of exogenous and endogenous hydrophobic electrophiles. May also function as a storage protein or ligandin for parasitotoxic ferriprotoporphyrin IX (hemin). The chain is Glutathione S-transferase from Plasmodium yoelii yoelii.